Reading from the N-terminus, the 433-residue chain is Anthranilate synthase component 1 (433 aa).

L-tryptophan contacts are provided by residues S29 and 219–221 (PYT). 253–254 (GT) lines the chorismate pocket. E280 provides a ligand contact to Mg(2+). Residues Y368, R388, 402–404 (GAG), and G404 each bind chorismate. Residue E417 participates in Mg(2+) binding.

It belongs to the anthranilate synthase component I family. As to quaternary structure, heterotetramer consisting of two non-identical subunits: a beta subunit (TrpG) and a large alpha subunit (TrpE). The cofactor is Mg(2+).

It catalyses the reaction chorismate + L-glutamine = anthranilate + pyruvate + L-glutamate + H(+). The protein operates within amino-acid biosynthesis; L-tryptophan biosynthesis; L-tryptophan from chorismate: step 1/5. Feedback inhibited by tryptophan. In terms of biological role, part of a heterotetrameric complex that catalyzes the two-step biosynthesis of anthranilate, an intermediate in the biosynthesis of L-tryptophan. In the first step, the glutamine-binding beta subunit (TrpG) of anthranilate synthase (AS) provides the glutamine amidotransferase activity which generates ammonia as a substrate that, along with chorismate, is used in the second step, catalyzed by the large alpha subunit of AS (TrpE) to produce anthranilate. In the absence of TrpG, TrpE can synthesize anthranilate directly from chorismate and high concentrations of ammonia. The chain is Anthranilate synthase component 1 (trpE) from Thermococcus kodakarensis (strain ATCC BAA-918 / JCM 12380 / KOD1) (Pyrococcus kodakaraensis (strain KOD1)).